The following is a 192-amino-acid chain: Xanthine phosphoribosyltransferase (192 aa).

The xanthine site is built by leucine 20 and asparagine 27. A 5-phospho-alpha-D-ribose 1-diphosphate-binding site is contributed by 128-132 (ANGQA). Residue lysine 156 coordinates xanthine.

This sequence belongs to the purine/pyrimidine phosphoribosyltransferase family. Xpt subfamily. Homodimer.

The protein resides in the cytoplasm. The catalysed reaction is XMP + diphosphate = xanthine + 5-phospho-alpha-D-ribose 1-diphosphate. Its pathway is purine metabolism; XMP biosynthesis via salvage pathway; XMP from xanthine: step 1/1. In terms of biological role, converts the preformed base xanthine, a product of nucleic acid breakdown, to xanthosine 5'-monophosphate (XMP), so it can be reused for RNA or DNA synthesis. The sequence is that of Xanthine phosphoribosyltransferase from Listeria monocytogenes serotype 4b (strain CLIP80459).